We begin with the raw amino-acid sequence, 70 residues long: DNA-directed RNA polymerase subunit omega (70 aa).

The protein belongs to the RNA polymerase subunit omega family. The RNAP catalytic core consists of 2 alpha, 1 beta, 1 beta' and 1 omega subunit. When a sigma factor is associated with the core the holoenzyme is formed, which can initiate transcription.

The enzyme catalyses RNA(n) + a ribonucleoside 5'-triphosphate = RNA(n+1) + diphosphate. Functionally, promotes RNA polymerase assembly. Latches the N- and C-terminal regions of the beta' subunit thereby facilitating its interaction with the beta and alpha subunits. This chain is DNA-directed RNA polymerase subunit omega, found in Pelobacter propionicus (strain DSM 2379 / NBRC 103807 / OttBd1).